Reading from the N-terminus, the 345-residue chain is Membrane progestin receptor alpha (345 aa).

At 1–74 the chain is on the cytoplasmic side; it reads MAMAVAQKFN…FQRHNEAVNV (74 aa). A helical membrane pass occupies residues 75 to 95; sequence WTHLLAALALLLRLIGLAASV. Residues 96-102 are Extracellular-facing; that stretch reads DFREDPH. The helical transmembrane segment at 103–123 threads the bilayer; sequence ALPLFFIVLASFTYLSFSAVA. The Cytoplasmic segment spans residues 124 to 136; sequence HLLQAKSEFWHYS. Residues 137–157 traverse the membrane as a helical segment; the sequence is FFFLDYVGVAVYQFGSALAHF. Topologically, residues 158–168 are extracellular; sequence YYAIEPSWHDK. Residues 169 to 189 traverse the membrane as a helical segment; the sequence is VQAIFLPTAAFLAWLSCAGSC. Residues 190 to 243 are Cytoplasmic-facing; it reads YNKYSQKPGLLGRIFQEAPSALAYVLDISPVLHRIIVSPLPAEEDPALLYHKCQ. A helical transmembrane segment spans residues 244-264; sequence VVFFLLAAAFFSTVMPESWFP. Topologically, residues 265–268 are extracellular; that stretch reads GSCH. The chain crosses the membrane as a helical span at residues 269 to 289; the sequence is IFGQGHQVFHVFLVLCTLAQL. The Cytoplasmic segment spans residues 290–315; it reads EAVTLDYQARRGIYEPLHARWPHNFS. A helical membrane pass occupies residues 316–336; it reads GLFLLTVASSSLTALLLSQLV. Over 337–345 the chain is Extracellular; the sequence is RRKLHQKTK.

The protein belongs to the ADIPOR family. In terms of tissue distribution, detected in most adult tissues. Higher expression found in white fat and liver than brown fat and skeletal muscle.

It localises to the cell membrane. Plasma membrane progesterone (P4) receptor coupled to G proteins. Seems to act through a G(i) mediated pathway. May be involved in oocyte maturation. Involved in neurosteroid inhibition of apoptosis. Also binds dehydroepiandrosterone (DHEA), pregnanolone, pregnenolone and allopregnanolone. This Mus musculus (Mouse) protein is Membrane progestin receptor alpha.